We begin with the raw amino-acid sequence, 257 residues long: Imidazole glycerol phosphate synthase subunit HisF (257 aa).

Residues Asp-11 and Asp-130 contribute to the active site.

The protein belongs to the HisA/HisF family. Heterodimer of HisH and HisF.

The protein localises to the cytoplasm. The enzyme catalyses 5-[(5-phospho-1-deoxy-D-ribulos-1-ylimino)methylamino]-1-(5-phospho-beta-D-ribosyl)imidazole-4-carboxamide + L-glutamine = D-erythro-1-(imidazol-4-yl)glycerol 3-phosphate + 5-amino-1-(5-phospho-beta-D-ribosyl)imidazole-4-carboxamide + L-glutamate + H(+). It functions in the pathway amino-acid biosynthesis; L-histidine biosynthesis; L-histidine from 5-phospho-alpha-D-ribose 1-diphosphate: step 5/9. IGPS catalyzes the conversion of PRFAR and glutamine to IGP, AICAR and glutamate. The HisF subunit catalyzes the cyclization activity that produces IGP and AICAR from PRFAR using the ammonia provided by the HisH subunit. This chain is Imidazole glycerol phosphate synthase subunit HisF, found in Pseudoalteromonas translucida (strain TAC 125).